A 181-amino-acid polypeptide reads, in one-letter code: UPF0302 protein ABC1905 (181 aa).

This sequence belongs to the UPF0302 family.

This chain is UPF0302 protein ABC1905, found in Shouchella clausii (strain KSM-K16) (Alkalihalobacillus clausii).